A 153-amino-acid polypeptide reads, in one-letter code: Ribosomal RNA large subunit methyltransferase H (153 aa).

S-adenosyl-L-methionine-binding positions include Leu-75, Gly-102, and 121 to 126 (LSKLTL).

This sequence belongs to the RNA methyltransferase RlmH family. In terms of assembly, homodimer.

It localises to the cytoplasm. The catalysed reaction is pseudouridine(1915) in 23S rRNA + S-adenosyl-L-methionine = N(3)-methylpseudouridine(1915) in 23S rRNA + S-adenosyl-L-homocysteine + H(+). Specifically methylates the pseudouridine at position 1915 (m3Psi1915) in 23S rRNA. This chain is Ribosomal RNA large subunit methyltransferase H, found in Campylobacter jejuni (strain RM1221).